The primary structure comprises 454 residues: MKQNSLNVKEKKLSKVAFSHVGCEKNLVDTEHMQGLLDKEGYEVDSNINDANVVVVNTCSFIETAREESIRKILEYTNQGKEVIVAGCMAQHFKDELIREIPEIKGLVGTGDYQKIAKVLDRVEQGEIVNEVSKIPEFIADEEMPRFVDKNKFVAYLRIAEGCNYNCAFCIIPKLRGPQRSRTIESIVSEAKSLAKKGIQEIILISQITTNYGQDIYGKPSLAKLLNELSKVSIPWIRIHYAYPTGLTDEVIRAFKDSKNIVPYFDLPLQHSHPDVLKSMNRPWQASLNESILEKIREEIPSAVLRTSLIVGFPGEKKEHFEHLLQFLDRHKFDHVGVFIFSPEEGTTAFHLPNKVSLEVAEARKDNVISVQQNISKDKNQTYVGSKMKILVEKISDNNELIGRSYNFAPEIDGTVILSVKDKIDLKNYIGKFVEANITFADEYDLYGEIIKIL.

Positions 14–125 (SKVAFSHVGC…IAKVLDRVEQ (112 aa)) constitute an MTTase N-terminal domain. 6 residues coordinate [4Fe-4S] cluster: Cys23, Cys59, Cys88, Cys163, Cys167, and Cys170. The Radical SAM core domain maps to 149–378 (DKNKFVAYLR…ISVQQNISKD (230 aa)). Positions 381 to 452 (QTYVGSKMKI…EYDLYGEIIK (72 aa)) constitute a TRAM domain.

Belongs to the methylthiotransferase family. RimO subfamily. Requires [4Fe-4S] cluster as cofactor.

It is found in the cytoplasm. The catalysed reaction is L-aspartate(89)-[ribosomal protein uS12]-hydrogen + (sulfur carrier)-SH + AH2 + 2 S-adenosyl-L-methionine = 3-methylsulfanyl-L-aspartate(89)-[ribosomal protein uS12]-hydrogen + (sulfur carrier)-H + 5'-deoxyadenosine + L-methionine + A + S-adenosyl-L-homocysteine + 2 H(+). Catalyzes the methylthiolation of an aspartic acid residue of ribosomal protein uS12. The chain is Ribosomal protein uS12 methylthiotransferase RimO from Prochlorococcus marinus (strain AS9601).